A 388-amino-acid polypeptide reads, in one-letter code: Succinyl-diaminopimelate desuccinylase (388 aa).

Zn(2+) is bound at residue histidine 84. Aspartate 86 is an active-site residue. Aspartate 115 serves as a coordination point for Zn(2+). The active-site Proton acceptor is glutamate 146. The Zn(2+) site is built by glutamate 147, glutamate 175, and histidine 360.

Belongs to the peptidase M20A family. DapE subfamily. Homodimer. The cofactor is Zn(2+). It depends on Co(2+) as a cofactor.

The catalysed reaction is N-succinyl-(2S,6S)-2,6-diaminopimelate + H2O = (2S,6S)-2,6-diaminopimelate + succinate. It participates in amino-acid biosynthesis; L-lysine biosynthesis via DAP pathway; LL-2,6-diaminopimelate from (S)-tetrahydrodipicolinate (succinylase route): step 3/3. Functionally, catalyzes the hydrolysis of N-succinyl-L,L-diaminopimelic acid (SDAP), forming succinate and LL-2,6-diaminopimelate (DAP), an intermediate involved in the bacterial biosynthesis of lysine and meso-diaminopimelic acid, an essential component of bacterial cell walls. The sequence is that of Succinyl-diaminopimelate desuccinylase from Helicobacter pylori (strain J99 / ATCC 700824) (Campylobacter pylori J99).